We begin with the raw amino-acid sequence, 96 residues long: Complement inhibitor RaCI4 (96 aa).

A signal peptide spans 1 to 24 (MSAFNIFALVVVVCALMINECCTS). Intrachain disulfides connect cysteine 37–cysteine 61, cysteine 42–cysteine 63, and cysteine 57–cysteine 78.

This sequence belongs to the RaCI family. In terms of tissue distribution, expressed in salivary glands.

The protein localises to the secreted. In terms of biological role, complement inhibitor. Prevents complement-mediated C5 activation by binding to C5. Binds C5 at a different binding site than the other tick complement inhibitors OmCI and CirpT1, and the drug eculizumab. Inhibits complement in human and guinea pig but not in other species tested (rabbit, rat, mouse, and pig). This chain is Complement inhibitor RaCI4, found in Hyalomma rufipes (Tick).